A 1160-amino-acid polypeptide reads, in one-letter code: Nck-associated protein 1 homolog (1160 aa).

This sequence belongs to the HEM-1/HEM-2 family. In terms of assembly, part of a Scar/WAVE complex containing brk1, scrA, abiA, pirA and napA.

Involved in regulation of actin and microtubule organization. Involved in cell adhesion. This chain is Nck-associated protein 1 homolog (napA), found in Dictyostelium discoideum (Social amoeba).